The primary structure comprises 92 residues: PqqA binding protein (92 aa).

The protein belongs to the PqqD family. As to quaternary structure, monomer. Interacts with PqqE.

The protein operates within cofactor biosynthesis; pyrroloquinoline quinone biosynthesis. Functionally, functions as a PqqA binding protein and presents PqqA to PqqE, in the pyrroloquinoline quinone (PQQ) biosynthetic pathway. The sequence is that of PqqA binding protein from Pseudomonas aeruginosa (strain UCBPP-PA14).